The sequence spans 632 residues: Extracellular metalloproteinase 2 (632 aa).

The first 19 residues, 1–19, serve as a signal peptide directing secretion; that stretch reads MHGLLLAGLAAALPLGVAG. Residues 20-244 constitute a propeptide that is removed on maturation; sequence LPARQQSGLS…VHNVVDYVAS (225 aa). N-linked (GlcNAc...) asparagine glycosylation is present at asparagine 270. Histidine 429 is a binding site for Zn(2+). The active site involves glutamate 430. Histidine 433 is a binding site for Zn(2+).

Belongs to the peptidase M36 family. It depends on Zn(2+) as a cofactor.

The protein localises to the secreted. In terms of biological role, secreted metalloproteinase probably acting as a virulence factor. This is Extracellular metalloproteinase 2 (MEP2) from Trichophyton tonsurans (Scalp ringworm fungus).